The chain runs to 111 residues: Natriuretic peptide TNP-b (111 aa).

The N-terminal stretch at 1–27 is a signal peptide; the sequence is MVGLSRLAGGGLLLLLLLALLPLALDG. Residues 28–71 constitute a propeptide that is removed on maturation; it reads KPAPLPQALPEALAGGTTALRRDVTEEQQQQLVAEESSGPAAGR. 2 disordered regions span residues 51–77 and 92–111; these read VTEE…PKIG and SGLG…PGGS. An intrachain disulfide couples Cys-80 to Cys-96. A propeptide spanning residues 107–111 is cleaved from the precursor; the sequence is IPGGS.

This sequence belongs to the natriuretic peptide family. In terms of tissue distribution, expressed by the venom gland.

The protein resides in the secreted. Functionally, snake venom natriuretic peptide that exhibits vasoactive and probable hypotensive activity. Is only weakly active on natriuretic peptide receptor-C (NPR3). The protein is Natriuretic peptide TNP-b of Oxyuranus scutellatus scutellatus (Australian taipan).